We begin with the raw amino-acid sequence, 1886 residues long: Polyprotein P3 (1886 aa).

3 disordered regions span residues 1–24 (MATRRLPAVTQTDGSRTATESGVP), 420–466 (RCDS…MQDD), and 478–529 (RMKK…NQPE). Positions 9–20 (VTQTDGSRTATE) are enriched in polar residues. Positions 488 to 498 (QQALSSQAQEE) are enriched in low complexity. The CCHC-type zinc finger occupies 879–896 (CKCYICGQEGHYANQCRN). In terms of domain architecture, Peptidase A2 spans 1215 to 1292 (INAIVDTGAT…GLSPGIQMII (78 aa)). Asp-1220 serves as the catalytic For protease activity. Residues 1425–1615 (LLQMKVIRPS…PEIDFLGASL (191 aa)) enclose the Reverse transcriptase domain. The region spanning 1706 to 1841 (KDSFIIIETD…ADALSRMINF (136 aa)) is the RNase H type-1 domain. Residues Asp-1715, Glu-1758, Asp-1784, and Asp-1833 each contribute to the Mg(2+) site.

Post-translationally, polyprotein P3 is presumably proteolytically cleaved into several chains by viral protease.

It catalyses the reaction Endonucleolytic cleavage to 5'-phosphomonoester.. The enzyme catalyses DNA(n) + a 2'-deoxyribonucleoside 5'-triphosphate = DNA(n+1) + diphosphate. Capsid protein self assembles to form a bacilliform capsid about 90-900 nm in length. The capsid encapsulates the genomic dsDNA. Following virus entry into host cell, provides nuclear import of the viral genome. Virus particles do not enter the nucleus, but are targeted to the nuclear membrane through the interaction with host importins. The sequence is that of Polyprotein P3 from Commelina yellow mottle virus (CoYMV).